We begin with the raw amino-acid sequence, 238 residues long: MPDEKLPQYNEVWNDLEKGCLHSCPSYSVNNHVNNPIVKQNSTLTQPSLRKKNTMAAPARLRKRSENVRLTQARYAIFHIFLPFILTLLLYHNFYNYFDQALADLNSVVKYVIETIVLIFTYVMTVIIVYFSFSLIKLAFEEAYVYAPSVAKANEGLAKAIAGLAKYVAKAIQGLAHIILSLLLFILGLEVIEQDEETGDVEMSSMRGQAITTEPASDNTMAEETDCNTSKDVESGSN.

3 consecutive transmembrane segments (helical) span residues 75–95 (YAIF…HNFY), 116–136 (IVLI…FSLI), and 172–192 (IQGL…LEVI). Residues 200 to 238 (DVEMSSMRGQAITTEPASDNTMAEETDCNTSKDVESGSN) are disordered. The segment covering 206–220 (MRGQAITTEPASDNT) has biased composition (polar residues). Positions 229–238 (TSKDVESGSN) are enriched in basic and acidic residues.

The protein resides in the membrane. This is an uncharacterized protein from Schizosaccharomyces pombe (strain 972 / ATCC 24843) (Fission yeast).